Here is a 114-residue protein sequence, read N- to C-terminus: Large ribosomal subunit protein bL19 (114 aa).

The protein belongs to the bacterial ribosomal protein bL19 family.

This protein is located at the 30S-50S ribosomal subunit interface and may play a role in the structure and function of the aminoacyl-tRNA binding site. The polypeptide is Large ribosomal subunit protein bL19 (Lysinibacillus sphaericus (strain C3-41)).